The primary structure comprises 125 residues: uncharacterized protein (125 aa).

A signal peptide spans 1–21 (MIRNIIITISAILLLTSKGFA). Positions 54-102 (KPEIREEIQKYRVEIVNINKKKRELYDKLSKEAQNFLAKEQEYKQRLSS) form a coiled coil. The disordered stretch occupies residues 96–125 (YKQRLSSSSMATEDSKDNNTAKDNKDADKK). Over residues 108–125 (EDSKDNNTAKDNKDADKK) the composition is skewed to basic and acidic residues.

This is an uncharacterized protein from Rickettsia bellii (strain RML369-C).